The following is a 95-amino-acid chain: Integration host factor subunit beta (95 aa).

Belongs to the bacterial histone-like protein family. Heterodimer of an alpha and a beta chain.

This protein is one of the two subunits of integration host factor, a specific DNA-binding protein that functions in genetic recombination as well as in transcriptional and translational control. The protein is Integration host factor subunit beta of Shewanella pealeana (strain ATCC 700345 / ANG-SQ1).